The chain runs to 206 residues: Ribosomal RNA large subunit methyltransferase E (206 aa).

S-adenosyl-L-methionine contacts are provided by glycine 61, tryptophan 63, aspartate 81, aspartate 97, and aspartate 122. Lysine 162 functions as the Proton acceptor in the catalytic mechanism.

The protein belongs to the class I-like SAM-binding methyltransferase superfamily. RNA methyltransferase RlmE family.

It is found in the cytoplasm. It carries out the reaction uridine(2552) in 23S rRNA + S-adenosyl-L-methionine = 2'-O-methyluridine(2552) in 23S rRNA + S-adenosyl-L-homocysteine + H(+). Specifically methylates the uridine in position 2552 of 23S rRNA at the 2'-O position of the ribose in the fully assembled 50S ribosomal subunit. This chain is Ribosomal RNA large subunit methyltransferase E, found in Neisseria meningitidis serogroup C (strain 053442).